We begin with the raw amino-acid sequence, 102 residues long: Putative RNA-binding protein RbpA (102 aa).

The RRM domain maps to serine 2–proline 79. The segment covering lysine 73–glycine 84 has biased composition (basic and acidic residues). Residues lysine 73 to tyrosine 102 are disordered. The segment covering proline 85–tyrosine 102 has biased composition (gly residues).

In Nostoc sp. (strain PCC 7120 / SAG 25.82 / UTEX 2576), this protein is Putative RNA-binding protein RbpA (rbpA).